Here is a 509-residue protein sequence, read N- to C-terminus: 2-isopropylmalate synthase (509 aa).

The region spanning 4-266 is the Pyruvate carboxyltransferase domain; it reads VRIFDTTLRD…YTGIKTEEIY (263 aa). The Mn(2+) site is built by aspartate 13, histidine 201, histidine 203, and asparagine 237. Residues 390–509 are regulatory domain; sequence TLDYFHISTG…FDYQAKGEKQ (120 aa).

It belongs to the alpha-IPM synthase/homocitrate synthase family. LeuA type 1 subfamily. In terms of assembly, homodimer. Requires Mn(2+) as cofactor.

Its subcellular location is the cytoplasm. It catalyses the reaction 3-methyl-2-oxobutanoate + acetyl-CoA + H2O = (2S)-2-isopropylmalate + CoA + H(+). The protein operates within amino-acid biosynthesis; L-leucine biosynthesis; L-leucine from 3-methyl-2-oxobutanoate: step 1/4. Its function is as follows. Catalyzes the condensation of the acetyl group of acetyl-CoA with 3-methyl-2-oxobutanoate (2-ketoisovalerate) to form 3-carboxy-3-hydroxy-4-methylpentanoate (2-isopropylmalate). The polypeptide is 2-isopropylmalate synthase (Carboxydothermus hydrogenoformans (strain ATCC BAA-161 / DSM 6008 / Z-2901)).